A 115-amino-acid polypeptide reads, in one-letter code: Type 3 secretion system chaperone YscG (115 aa).

This sequence belongs to the YscG family. As to quaternary structure, component of the heterodimeric YscE-YscG chaperone. The YscE-YscG chaperone forms a stable ternary complex with YscF/SctF.

It is found in the cytoplasm. In terms of biological role, chaperone of the type III secretion system (T3SS), also called injectisome, which is used to inject bacterial effector proteins into eukaryotic host cells. Along with YscE, prevents premature polymerization of the YscF/SctF needle protein within the cytoplasm. Required for Yop secretion. This Yersinia enterocolitica protein is Type 3 secretion system chaperone YscG.